Consider the following 210-residue polypeptide: Holliday junction resolvase RecU (210 aa).

Positions 93, 95, 108, and 127 each coordinate Mg(2+).

The protein belongs to the RecU family. Mg(2+) serves as cofactor.

Its subcellular location is the cytoplasm. The enzyme catalyses Endonucleolytic cleavage at a junction such as a reciprocal single-stranded crossover between two homologous DNA duplexes (Holliday junction).. Functionally, endonuclease that resolves Holliday junction intermediates in genetic recombination. Cleaves mobile four-strand junctions by introducing symmetrical nicks in paired strands. Promotes annealing of linear ssDNA with homologous dsDNA. Required for DNA repair, homologous recombination and chromosome segregation. This Lactobacillus helveticus (strain DPC 4571) protein is Holliday junction resolvase RecU.